The sequence spans 521 residues: Probable cytosol aminopeptidase (521 aa).

Lys268 and Asp273 together coordinate Mn(2+). Lys280 is an active-site residue. Asp291, Asp350, and Glu352 together coordinate Mn(2+). Arg354 is a catalytic residue.

This sequence belongs to the peptidase M17 family. It depends on Mn(2+) as a cofactor.

It localises to the cytoplasm. The enzyme catalyses Release of an N-terminal amino acid, Xaa-|-Yaa-, in which Xaa is preferably Leu, but may be other amino acids including Pro although not Arg or Lys, and Yaa may be Pro. Amino acid amides and methyl esters are also readily hydrolyzed, but rates on arylamides are exceedingly low.. The catalysed reaction is Release of an N-terminal amino acid, preferentially leucine, but not glutamic or aspartic acids.. Functionally, presumably involved in the processing and regular turnover of intracellular proteins. Catalyzes the removal of unsubstituted N-terminal amino acids from various peptides. This chain is Probable cytosol aminopeptidase, found in Chromobacterium violaceum (strain ATCC 12472 / DSM 30191 / JCM 1249 / CCUG 213 / NBRC 12614 / NCIMB 9131 / NCTC 9757 / MK).